The sequence spans 74 residues: Porwaprin-a (74 aa).

The first 24 residues, 1-24 (MSSGGLLLLLGLLTLWEVLTPVSS), serve as a signal peptide directing secretion. Positions 27-71 (RPKKLGLCPPRPQKPCVKECKNDWSCPGQQKCCNYGCIDECRDPI) constitute a WAP domain. Cystine bridges form between cysteine 34/cysteine 59, cysteine 42/cysteine 63, cysteine 46/cysteine 58, and cysteine 52/cysteine 67.

The protein belongs to the venom waprin family. As to expression, expressed by the venom gland.

The protein resides in the secreted. In terms of biological role, damages membranes of susceptible bacteria. Has no hemolytic activity. Not toxic to mice. Does not inhibit the proteinases elastase and cathepsin G. The protein is Porwaprin-a of Pseudechis porphyriacus (Red-bellied black snake).